We begin with the raw amino-acid sequence, 147 residues long: 3-dehydroquinate dehydratase (147 aa).

Y24 functions as the Proton acceptor in the catalytic mechanism. Residues N74, H80, and D87 each contribute to the substrate site. H100 (proton donor) is an active-site residue. Substrate is bound by residues 101–102 and R111; that span reads LS.

Belongs to the type-II 3-dehydroquinase family. Homododecamer.

The catalysed reaction is 3-dehydroquinate = 3-dehydroshikimate + H2O. It functions in the pathway metabolic intermediate biosynthesis; chorismate biosynthesis; chorismate from D-erythrose 4-phosphate and phosphoenolpyruvate: step 3/7. Catalyzes a trans-dehydration via an enolate intermediate. The chain is 3-dehydroquinate dehydratase from Azorhizobium caulinodans (strain ATCC 43989 / DSM 5975 / JCM 20966 / LMG 6465 / NBRC 14845 / NCIMB 13405 / ORS 571).